The chain runs to 306 residues: D-alanine--D-alanine ligase (306 aa).

Positions 102 to 300 (KIIAASAGVS…YGDIVKWIVE (199 aa)) constitute an ATP-grasp domain. 128-183 (PMKPPYVIKPIREGSSFGVVIVGSDETMPLHDIMNNEWVYDDEIMVEKYVPGRELT) contributes to the ATP binding site. Positions 253, 267, and 269 each coordinate Mg(2+).

The protein belongs to the D-alanine--D-alanine ligase family. It depends on Mg(2+) as a cofactor. Mn(2+) is required as a cofactor.

It localises to the cytoplasm. The catalysed reaction is 2 D-alanine + ATP = D-alanyl-D-alanine + ADP + phosphate + H(+). The protein operates within cell wall biogenesis; peptidoglycan biosynthesis. In terms of biological role, cell wall formation. The polypeptide is D-alanine--D-alanine ligase (Bartonella bacilliformis (strain ATCC 35685 / KC583 / Herrer 020/F12,63)).